The following is a 388-amino-acid chain: Angiopoietin-related protein 5 (388 aa).

The signal sequence occupies residues 1 to 25; it reads MMSPSQASLLFLNVCIFICGEAVQG. The N-linked (GlcNAc...) asparagine glycan is linked to Asn-53. Residues 98–123 are a coiled coil; the sequence is LRNMMDEQQASLDYLSNQVNELMNRV. Residues 141 to 383 form the Fibrinogen C-terminal domain; sequence RPVQSHGLDC…SVSMKIRRMY (243 aa). A glycan (N-linked (GlcNAc...) asparagine) is linked at Asn-238. Disulfide bonds link Cys-310-Cys-314 and Cys-324-Cys-338. N-linked (GlcNAc...) asparagine glycosylation occurs at Asn-329.

Mainly expressed in adult heart.

It localises to the secreted. This chain is Angiopoietin-related protein 5 (ANGPTL5), found in Homo sapiens (Human).